The chain runs to 423 residues: Adenylosuccinate synthetase (423 aa).

D12 serves as the catalytic Proton acceptor. D12 and G39 together coordinate Mg(2+). IMP is bound by residues 37-40, T129, R143, N221, T236, and R300; that span reads NAGH. Residue 39-41 participates in GTP binding; sequence GHS. H40 functions as the Proton donor in the catalytic mechanism. 296–302 contacts substrate; that stretch reads VSTGRKR. GTP contacts are provided by residues R302, 328–330, and 412–414; these read KLD and GTG.

The protein belongs to the adenylosuccinate synthetase family. In terms of assembly, homodimer. It depends on Mg(2+) as a cofactor.

The protein localises to the cytoplasm. The catalysed reaction is IMP + L-aspartate + GTP = N(6)-(1,2-dicarboxyethyl)-AMP + GDP + phosphate + 2 H(+). Its pathway is purine metabolism; AMP biosynthesis via de novo pathway; AMP from IMP: step 1/2. Plays an important role in the de novo pathway and in the salvage pathway of purine nucleotide biosynthesis. Catalyzes the first committed step in the biosynthesis of AMP from IMP. The chain is Adenylosuccinate synthetase from Pyricularia oryzae (strain 70-15 / ATCC MYA-4617 / FGSC 8958) (Rice blast fungus).